A 189-amino-acid chain; its full sequence is Signal peptidase complex catalytic subunit sec11 (189 aa).

The Cytoplasmic portion of the chain corresponds to methionine 1–glutamine 8. The chain crosses the membrane as a helical; Signal-anchor for type II membrane protein span at residues glycine 9–methionine 25. Residues glycine 26–glutamine 189 are Lumenal-facing. Catalysis depends on charge relay system residues serine 47 and histidine 104. The N-linked (GlcNAc...) asparagine glycan is linked to asparagine 114. Aspartate 129 acts as the Charge relay system in catalysis. Positions isoleucine 173–isoleucine 184 are C-terminal short (CTS) helix.

This sequence belongs to the peptidase S26B family. As to quaternary structure, component of the signal peptidase complex (SPC) composed of a catalytic subunit sec11 and three accessory subunits spc1, spc2 and spc3. The complex induces a local thinning of the ER membrane which is used to measure the length of the signal peptide (SP) h-region of protein substrates. This ensures the selectivity of the complex towards h-regions shorter than 18-20 amino acids. SPC associates with the translocon complex.

Its subcellular location is the endoplasmic reticulum membrane. The catalysed reaction is Cleavage of hydrophobic, N-terminal signal or leader sequences from secreted and periplasmic proteins.. Catalytic component of the signal peptidase complex (SPC) which catalyzes the cleavage of N-terminal signal sequences from nascent proteins as they are translocated into the lumen of the endoplasmic reticulum. Specifically cleaves N-terminal signal peptides that contain a hydrophobic alpha-helix (h-region) shorter than 18-20 amino acids. The sequence is that of Signal peptidase complex catalytic subunit sec11 (sec11) from Schizosaccharomyces pombe (strain 972 / ATCC 24843) (Fission yeast).